The following is a 189-amino-acid chain: UPF0301 protein HRM2_24640 (189 aa).

This sequence belongs to the UPF0301 (AlgH) family.

This Desulforapulum autotrophicum (strain ATCC 43914 / DSM 3382 / VKM B-1955 / HRM2) (Desulfobacterium autotrophicum) protein is UPF0301 protein HRM2_24640.